A 244-amino-acid chain; its full sequence is Putative nucleosome assembly protein C36B7.08c (244 aa).

Residues 199 to 244 form a disordered region; it reads EAMTEEASDEDESVDLEEDEEEEDEEDEEGDEEKQEPPSKKSKKSN. Acidic residues predominate over residues 201 to 232; sequence MTEEASDEDESVDLEEDEEEEDEEDEEGDEEK. S211 is subject to Phosphoserine.

It belongs to the nucleosome assembly protein (NAP) family.

It is found in the nucleus. The polypeptide is Putative nucleosome assembly protein C36B7.08c (Schizosaccharomyces pombe (strain 972 / ATCC 24843) (Fission yeast)).